A 282-amino-acid chain; its full sequence is Biotin synthase (282 aa).

The 228-residue stretch at 1 to 228 (MQEIFLCSIS…NARLMVAGGR (228 aa)) folds into the Radical SAM core domain. C17, C21, and C24 together coordinate [4Fe-4S] cluster. [2Fe-2S] cluster-binding residues include C61, C96, C154, and R221.

Belongs to the radical SAM superfamily. Biotin synthase family. Homodimer. It depends on [4Fe-4S] cluster as a cofactor. [2Fe-2S] cluster is required as a cofactor.

It catalyses the reaction (4R,5S)-dethiobiotin + (sulfur carrier)-SH + 2 reduced [2Fe-2S]-[ferredoxin] + 2 S-adenosyl-L-methionine = (sulfur carrier)-H + biotin + 2 5'-deoxyadenosine + 2 L-methionine + 2 oxidized [2Fe-2S]-[ferredoxin]. The protein operates within cofactor biosynthesis; biotin biosynthesis; biotin from 7,8-diaminononanoate: step 2/2. In terms of biological role, catalyzes the conversion of dethiobiotin (DTB) to biotin by the insertion of a sulfur atom into dethiobiotin via a radical-based mechanism. The polypeptide is Biotin synthase (Helicobacter pylori (strain P12)).